The sequence spans 423 residues: Histidine--tRNA ligase (423 aa).

It belongs to the class-II aminoacyl-tRNA synthetase family. In terms of assembly, homodimer.

The protein resides in the cytoplasm. It catalyses the reaction tRNA(His) + L-histidine + ATP = L-histidyl-tRNA(His) + AMP + diphosphate + H(+). The sequence is that of Histidine--tRNA ligase from Rhodococcus erythropolis (strain PR4 / NBRC 100887).